Consider the following 69-residue polypeptide: DNA gyrase inhibitor YacG (69 aa).

The segment covering M1–R15 has biased composition (basic and acidic residues). Residues M1–E22 form a disordered region. Zn(2+) contacts are provided by C20, C23, C35, and C39.

This sequence belongs to the DNA gyrase inhibitor YacG family. As to quaternary structure, interacts with GyrB. Zn(2+) is required as a cofactor.

In terms of biological role, inhibits all the catalytic activities of DNA gyrase by preventing its interaction with DNA. Acts by binding directly to the C-terminal domain of GyrB, which probably disrupts DNA binding by the gyrase. This is DNA gyrase inhibitor YacG from Allorhizobium ampelinum (strain ATCC BAA-846 / DSM 112012 / S4) (Agrobacterium vitis (strain S4)).